A 437-amino-acid polypeptide reads, in one-letter code: GTPase Era, mitochondrial (437 aa).

The transit peptide at methionine 1–cysteine 43 directs the protein to the mitochondrion. The Era-type G domain occupies arginine 112 to glycine 330. The tract at residues glycine 120–serine 127 is G1. Position 120-127 (glycine 120–serine 127) interacts with GTP. Residues histidine 146–cysteine 150 form a G2 region. Residues aspartate 167 to glycine 170 form a G3 region. Aspartate 167–isoleucine 171 contacts GTP. Residue serine 173 is modified to Phosphoserine. Asparagine 236–aspartate 239 serves as a coordination point for GTP. A G4 region spans residues asparagine 236 to aspartate 239. The disordered stretch occupies residues histidine 271 to serine 290. Residues leucine 308 to alanine 310 are G5. The 78-residue stretch at leucine 360–lysine 437 folds into the KH type-2 domain.

The protein belongs to the TRAFAC class TrmE-Era-EngA-EngB-Septin-like GTPase superfamily. Era GTPase family.

Its subcellular location is the mitochondrion matrix. The protein resides in the mitochondrion inner membrane. Its function is as follows. Probable GTPase that plays a role in the mitochondrial ribosomal small subunit assembly. Specifically binds the 12S mitochondrial rRNA (12S mt-rRNA) to a 33 nucleotide section delineating the 3' terminal stem-loop region. May act as a chaperone that protects the 12S mt-rRNA on the 28S mitoribosomal subunit during ribosomal small subunit assembly. In Homo sapiens (Human), this protein is GTPase Era, mitochondrial (ERAL1).